A 235-amino-acid chain; its full sequence is Centromere protein H (235 aa).

The segment at 1–23 (MAGRLSESVGSGPGAEAETAADP) is disordered. A coiled-coil region spans residues 125–145 (EIIQAHQQARVIRENLNDIRR).

The protein belongs to the CENP-H/MCM16 family. In terms of assembly, component of the CENPA-HI complex, at least composed of CENPH, CENPI, CENPK, CENPL, CENPM, CENPO and CENPP. Interacts with NDC80.

Its subcellular location is the nucleus. The protein localises to the chromosome. The protein resides in the centromere. It is found in the kinetochore. In terms of biological role, component of the CENPA-HI complex, a centromeric complex involved in assembly of kinetochore proteins, mitotic progression and chromosome segregation. Required for the localization of CENPC but not CENPA to the centromere. It however may be involved in incorporation of newly synthesized CENPA into centromeres via its interaction with the CENPA-NAC complex. The sequence is that of Centromere protein H (CENPH) from Gallus gallus (Chicken).